Here is a 196-residue protein sequence, read N- to C-terminus: Interleukin-23 subunit alpha (196 aa).

Residues 1 to 21 (MLDCRAIILLWLLPWATQGLA) form the signal peptide.

The protein belongs to the IL-6 superfamily. As to quaternary structure, heterodimer with IL12B; disulfide-linked. The heterodimer is known as interleukin IL-23. Interacts with IL23R; this interaction enables recruitment of IL12RB1.

It is found in the secreted. In terms of biological role, associates with IL12B to form the pro-inflammatory cytokine IL-23 that plays different roles in innate and adaptive immunity. Released by antigen-presenting cells such as dendritic cells or macrophages, binds to a heterodimeric receptor complex composed of IL12RB1 and IL23R to activate JAK2 and TYK2 which then phosphorylate the receptor to form a docking site leading to the phosphorylation of STAT3 and STAT4. This process leads to activation of several pathways including p38 MAPK or NF-kappa-B and promotes the production of pro-inflammatory cytokines such as interleukin-17A/IL17A. In turn, participates in the early and effective intracellular bacterial clearance. Promotes the expansion and survival of T-helper 17 cells, a CD4-positive helper T-cell subset that produces IL-17, as well as other IL-17-producing cells. The sequence is that of Interleukin-23 subunit alpha (Il23a) from Rattus norvegicus (Rat).